We begin with the raw amino-acid sequence, 256 residues long: Enolase-phosphatase E1 (256 aa).

Positions 14 and 16 each coordinate Mg(2+). Residues 142–143 and K176 each bind substrate; that span reads SS. D201 serves as a coordination point for Mg(2+).

Belongs to the HAD-like hydrolase superfamily. MasA/MtnC family. As to quaternary structure, monomer. Mg(2+) is required as a cofactor.

It localises to the cytoplasm. The protein localises to the nucleus. It carries out the reaction 5-methylsulfanyl-2,3-dioxopentyl phosphate + H2O = 1,2-dihydroxy-5-(methylsulfanyl)pent-1-en-3-one + phosphate. Its pathway is amino-acid biosynthesis; L-methionine biosynthesis via salvage pathway; L-methionine from S-methyl-5-thio-alpha-D-ribose 1-phosphate: step 3/6. It participates in amino-acid biosynthesis; L-methionine biosynthesis via salvage pathway; L-methionine from S-methyl-5-thio-alpha-D-ribose 1-phosphate: step 4/6. Functionally, bifunctional enzyme that catalyzes the enolization of 2,3-diketo-5-methylthiopentyl-1-phosphate (DK-MTP-1-P) into the intermediate 2-hydroxy-3-keto-5-methylthiopentenyl-1-phosphate (HK-MTPenyl-1-P), which is then dephosphorylated to form the acireductone 1,2-dihydroxy-3-keto-5-methylthiopentene (DHK-MTPene). This is Enolase-phosphatase E1 from Drosophila sechellia (Fruit fly).